Here is a 347-residue protein sequence, read N- to C-terminus: Heat-inducible transcription repressor HrcA (347 aa).

The protein belongs to the HrcA family.

In terms of biological role, negative regulator of class I heat shock genes (grpE-dnaK-dnaJ and groELS operons). Prevents heat-shock induction of these operons. The chain is Heat-inducible transcription repressor HrcA from Nocardia farcinica (strain IFM 10152).